We begin with the raw amino-acid sequence, 298 residues long: Apolipoprotein E (298 aa).

A signal peptide spans 1–18; sequence MKVLWAALVVTLLAGCQA. Repeat copies occupy residues 74 to 95, 96 to 117, 118 to 139, 140 to 161, 162 to 183, and 223 to 244. Residues 74–244 are 8 X 22 AA approximate tandem repeats; sequence LLMEDTMKEV…RLEEVREQME (171 aa). The residue at position 137 (Met137) is a Methionine sulfoxide. The residue at position 141 (Ser141) is a Phosphoserine. The tract at residues 152-162 is LDL and other lipoprotein receptors binding; it reads HLRKLRKRLLR. 156-159 serves as a coordination point for heparin; the sequence is LRKR. A lipid-binding and lipoprotein association region spans residues 204–272; sequence SLPSQPLRER…SWFEPMMEDM (69 aa). Residue 218-225 coordinates heparin; sequence GEQMRGRL. A specificity for association with VLDL region spans residues 260–272; sequence RFKSWFEPMMEDM.

Belongs to the apolipoprotein A1/A4/E family. In terms of assembly, homotetramer. May interact with ABCA1; functionally associated with ABCA1 in the biogenesis of HDLs. May interact with APP/A4 amyloid-beta peptide; the interaction is extremely stable in vitro but its physiological significance is unclear. May interact with MAPT. May interact with MAP2. In the cerebrospinal fluid, interacts with secreted SORL1. Interacts with PMEL; this allows the loading of PMEL luminal fragment on ILVs to induce fibril nucleation. In terms of processing, APOE exists as multiple glycosylated and sialylated glycoforms within cells and in plasma. The extent of glycosylation and sialylation are tissue and context specific. Glycated in plasma VLDL. Post-translationally, phosphorylated by FAM20C in the extracellular medium.

The protein resides in the secreted. It is found in the extracellular space. The protein localises to the extracellular matrix. Its subcellular location is the extracellular vesicle. It localises to the endosome. The protein resides in the multivesicular body. Functionally, APOE is an apolipoprotein, a protein associating with lipid particles, that mainly functions in lipoprotein-mediated lipid transport between organs via the plasma and interstitial fluids. APOE is a core component of plasma lipoproteins and is involved in their production, conversion and clearance. Apolipoproteins are amphipathic molecules that interact both with lipids of the lipoprotein particle core and the aqueous environment of the plasma. As such, APOE associates with chylomicrons, chylomicron remnants, very low density lipoproteins (VLDL) and intermediate density lipoproteins (IDL) but shows a preferential binding to high-density lipoproteins (HDL). It also binds a wide range of cellular receptors including the LDL receptor/LDLR, the LDL receptor-related proteins LRP1, LRP2 and LRP8 and the very low-density lipoprotein receptor/VLDLR that mediate the cellular uptake of the APOE-containing lipoprotein particles. Finally, APOE also has a heparin-binding activity and binds heparan-sulfate proteoglycans on the surface of cells, a property that supports the capture and the receptor-mediated uptake of APOE-containing lipoproteins by cells. A main function of APOE is to mediate lipoprotein clearance through the uptake of chylomicrons, VLDLs, and HDLs by hepatocytes. APOE is also involved in the biosynthesis by the liver of VLDLs as well as their uptake by peripheral tissues ensuring the delivery of triglycerides and energy storage in muscle, heart and adipose tissues. By participating in the lipoprotein-mediated distribution of lipids among tissues, APOE plays a critical role in plasma and tissues lipid homeostasis. APOE is also involved in two steps of reverse cholesterol transport, the HDLs-mediated transport of cholesterol from peripheral tissues to the liver, and thereby plays an important role in cholesterol homeostasis. First, it is functionally associated with ABCA1 in the biogenesis of HDLs in tissues. Second, it is enriched in circulating HDLs and mediates their uptake by hepatocytes. APOE also plays an important role in lipid transport in the central nervous system, regulating neuron survival and sprouting. In Dasyprocta punctata (Central American agouti), this protein is Apolipoprotein E (APOE).